The sequence spans 92 residues: Small ribosomal subunit protein uS19 (92 aa).

The disordered stretch occupies residues 73–92 (EFSPTRSFRGHAGAKNKGRK). Positions 80–92 (FRGHAGAKNKGRK) are enriched in basic residues.

Belongs to the universal ribosomal protein uS19 family.

In terms of biological role, protein S19 forms a complex with S13 that binds strongly to the 16S ribosomal RNA. This chain is Small ribosomal subunit protein uS19, found in Christiangramia forsetii (strain DSM 17595 / CGMCC 1.15422 / KT0803) (Gramella forsetii).